Here is a 1072-residue protein sequence, read N- to C-terminus: Teashirt homolog 3 (1072 aa).

Disordered regions lie at residues 44-71 (ACPS…SETS), 130-153 (PSSE…CGSG), and 228-247 (HYRD…WSKP). Residues 57–71 (SSHEMDSESHISETS) are compositionally biased toward basic and acidic residues. 2 C2H2-type zinc fingers span residues 204-228 (FRCK…ETGH) and 265-289 (LKCM…KTKH). Residues 228-237 (HYRDDNHETD) show a composition bias toward basic and acidic residues. A disordered region spans residues 315-336 (SLELELPSSPDSTGGTPKATLS). A C2H2-type 3; atypical zinc finger spans residues 376–400 (LKCMECGSSHDTLQELTAHMMVTGH). Basic and acidic residues predominate over residues 469–481 (AVLDEKPKEKEKA). Disordered regions lie at residues 469-489 (AVLD…EKYD), 569-594 (NSEI…PMPK), 616-690 (EKMK…PLSG), 784-815 (TKGK…TVTT), and 846-888 (TESH…RQSN). Composition is skewed to polar residues over residues 571–593 (EIVS…SPMP) and 649–660 (SSGSGFKSQENS). Phosphoserine is present on Ser-672. Low complexity-rich tracts occupy residues 791-815 (GCSL…TVTT) and 847-860 (ESHT…SSIS). The segment at residues 882 to 952 (RKGRQSNWNP…NVKYQLRRTG (71 aa)) is a DNA-binding region (homeobox; atypical). 2 consecutive C2H2-type zinc fingers follow at residues 967–989 (FFCN…LESH) and 1032–1055 (YQCK…SKTH).

The protein belongs to the teashirt C2H2-type zinc-finger protein family. Interacts (via N-terminus) with HDAC1 and HDAC2; the interaction is direct. Found in a trimeric complex with APBB1 and HDAC1; the interaction between HDAC1 and APBB1 is mediated by TSHZ3. Interacts (via homeobox domain) with APBB1 (via PID domain 1). Expressed in cortical neurons.

It is found in the nucleus. Its subcellular location is the cell projection. The protein resides in the growth cone. Transcriptional regulator involved in developmental processes. Functions in association with APBB1, SET and HDAC factors as a transcriptional repressor, that inhibits the expression of CASP4. TSHZ3-mediated transcription repression involves the recruitment of histone deacetylases HDAC1 and HDAC2. Associates with chromatin in a region surrounding the CASP4 transcriptional start site(s). Regulates the development of neurons involved in both respiratory rhythm and airflow control. Promotes maintenance of nucleus ambiguus (nA) motoneurons, which govern upper airway function, and establishes a respiratory rhythm generator (RRG) activity compatible with survival at birth. Involved in the differentiation of the proximal uretic smooth muscle cells during developmental processes. Involved in the up-regulation of myocardin, that directs the expression of smooth muscle cells in the proximal ureter. Involved in the modulation of glutamatergic synaptic transmission and long-term synaptic potentiation. In Rattus norvegicus (Rat), this protein is Teashirt homolog 3 (Tshz3).